Reading from the N-terminus, the 99-residue chain is Cystatin (99 aa).

In terms of domain architecture, Cystatin spans 3 to 99; that stretch reads GGLSPRSVSD…EEKLCGFQVW (97 aa). The Secondary area of contact motif lies at 47 to 51; that stretch reads QSVAG. Cys-65 and Cys-81 are disulfide-bonded.

Belongs to the cystatin family. Expressed by the venom gland.

The protein localises to the secreted. Inhibits various C1 cysteine proteases including cathepsin L (Ki is 0.1 nM), papain (Ki is 0.19 nM), cathepsin S (Ki is 1.2 nM), and cathepsin B (Ki is 2.5 nM). This protein has no toxic activity and its function in the venom is unknown. It may play a role as housekeeping or regulatory protein. The sequence is that of Cystatin from Naja atra (Chinese cobra).